Here is a 416-residue protein sequence, read N- to C-terminus: Gamma-glutamyl phosphate reductase (416 aa).

This sequence belongs to the gamma-glutamyl phosphate reductase family.

It localises to the cytoplasm. The catalysed reaction is L-glutamate 5-semialdehyde + phosphate + NADP(+) = L-glutamyl 5-phosphate + NADPH + H(+). It participates in amino-acid biosynthesis; L-proline biosynthesis; L-glutamate 5-semialdehyde from L-glutamate: step 2/2. Functionally, catalyzes the NADPH-dependent reduction of L-glutamate 5-phosphate into L-glutamate 5-semialdehyde and phosphate. The product spontaneously undergoes cyclization to form 1-pyrroline-5-carboxylate. This chain is Gamma-glutamyl phosphate reductase, found in Vibrio vulnificus (strain YJ016).